A 426-amino-acid chain; its full sequence is Gamma-glutamyl phosphate reductase (426 aa).

Belongs to the gamma-glutamyl phosphate reductase family.

The protein localises to the cytoplasm. It catalyses the reaction L-glutamate 5-semialdehyde + phosphate + NADP(+) = L-glutamyl 5-phosphate + NADPH + H(+). It participates in amino-acid biosynthesis; L-proline biosynthesis; L-glutamate 5-semialdehyde from L-glutamate: step 2/2. Functionally, catalyzes the NADPH-dependent reduction of L-glutamate 5-phosphate into L-glutamate 5-semialdehyde and phosphate. The product spontaneously undergoes cyclization to form 1-pyrroline-5-carboxylate. The protein is Gamma-glutamyl phosphate reductase of Cupriavidus taiwanensis (strain DSM 17343 / BCRC 17206 / CCUG 44338 / CIP 107171 / LMG 19424 / R1) (Ralstonia taiwanensis (strain LMG 19424)).